Reading from the N-terminus, the 242-residue chain is Ribonuclease PH (242 aa).

Phosphate-binding positions include arginine 87 and 125–127 (GTR).

The protein belongs to the RNase PH family. In terms of assembly, homohexameric ring arranged as a trimer of dimers.

It catalyses the reaction tRNA(n+1) + phosphate = tRNA(n) + a ribonucleoside 5'-diphosphate. In terms of biological role, phosphorolytic 3'-5' exoribonuclease that plays an important role in tRNA 3'-end maturation. Removes nucleotide residues following the 3'-CCA terminus of tRNAs; can also add nucleotides to the ends of RNA molecules by using nucleoside diphosphates as substrates, but this may not be physiologically important. Probably plays a role in initiation of 16S rRNA degradation (leading to ribosome degradation) during starvation. The chain is Ribonuclease PH from Thermosynechococcus vestitus (strain NIES-2133 / IAM M-273 / BP-1).